A 186-amino-acid polypeptide reads, in one-letter code: MARTKKTRRITDIMPMRKTDKRPENLSRPGKKLTRYELDAKSREEKKKKKRKGLTAGSRHSAVDTSKTIVLNEKKDPRVGSRKKVPLIVEFVNKPEKGMFIPSGALEEKAKTIDPMLELTQLENNESLNQLLDELDAGKTLSKKDQIFVNQCLDRIAQLMAELGIEEESEDDLYRTFETIDINQFK.

Positions 1 to 65 are disordered; that stretch reads MARTKKTRRI…AGSRHSAVDT (65 aa). Composition is skewed to basic and acidic residues over residues 9–25 and 34–45; these read RITD…RPEN and TRYELDAKSREE.

The protein belongs to the YihI family. In terms of assembly, interacts with Der.

A GTPase-activating protein (GAP) that modifies Der/EngA GTPase function. May play a role in ribosome biogenesis. The polypeptide is Der GTPase-activating protein YihI (Histophilus somni (strain 129Pt) (Haemophilus somnus)).